We begin with the raw amino-acid sequence, 657 residues long: Threonine--tRNA ligase (657 aa).

The TGS domain maps to 7–70; sequence SQTQVTVTLP…SEDASIEIVT (64 aa). Positions 253 to 555 are catalytic; sequence DHRKLGAELE…LIEHTGGNFP (303 aa). Residues Cys351, His402, and His532 each coordinate Zn(2+).

Belongs to the class-II aminoacyl-tRNA synthetase family. As to quaternary structure, homodimer. It depends on Zn(2+) as a cofactor.

The protein localises to the cytoplasm. It carries out the reaction tRNA(Thr) + L-threonine + ATP = L-threonyl-tRNA(Thr) + AMP + diphosphate + H(+). In terms of biological role, catalyzes the attachment of threonine to tRNA(Thr) in a two-step reaction: L-threonine is first activated by ATP to form Thr-AMP and then transferred to the acceptor end of tRNA(Thr). Also edits incorrectly charged L-seryl-tRNA(Thr). The chain is Threonine--tRNA ligase from Prosthecochloris aestuarii (strain DSM 271 / SK 413).